The following is a 486-amino-acid chain: E3 ubiquitin-protein ligase TRIM50 (486 aa).

The segment at 16-57 (CPVCLEVFKEPLMLQCGHSYCKGCLLSLSRHLDSELRCPVCR) adopts an RING-type zinc-finger fold. Residues 84-125 (PEPQVCTHHRNPLSLFCEKDQELICGLCGLLGSHQHHRVTPV) form a B box-type zinc finger. Zn(2+)-binding residues include C89, H92, C111, and H117. Coiled coils occupy residues 125-170 (VSTV…ESDV) and 204-235 (LVASLDMQLEQARGAQERLAQATCMLEQFGNE). Residues 275–474 (DIKLTVWKRL…LPMVLPLPSG (200 aa)) enclose the B30.2/SPRY domain. An N6-acetyllysine modification is found at K372.

Belongs to the TRIM/RBCC family. Can form dimers and trimers. Interacts with several E2 ubiquitin-conjugating enzymes, including UBE2L6, UBE2E1, UBE2E3. No interaction with UBE2H. Interacts with BECN1. Interacts with SQSTM1. Interacts with NLRP3. In terms of processing, auto-ubiquitinated. Post-translationally, acetylated by EP300 and KAT2B. HDAC6 drives TRIM50 deacetylation. Acetylation antagonizes with TRIM50 ubiquitination.

It is found in the cytoplasm. It catalyses the reaction S-ubiquitinyl-[E2 ubiquitin-conjugating enzyme]-L-cysteine + [acceptor protein]-L-lysine = [E2 ubiquitin-conjugating enzyme]-L-cysteine + N(6)-ubiquitinyl-[acceptor protein]-L-lysine.. Functionally, E3 ubiquitin-protein ligase that ubiquitinates Beclin-1/BECN1 in a 'Lys-63'-dependent manner enhancing its binding to ULK1. In turn, promotes starvation-induced autophagy activation. Also interacts with p62/SQSTM1 protein and thereby induces the formation and the autophagy clearance of aggresome-associated polyubiquitinated proteins through HDAC6 interaction. Also promotes NLRP3 inflammasome activation by directly inducing NLRP3 oligomerization independent of its E3 ligase function. This chain is E3 ubiquitin-protein ligase TRIM50 (TRIM50), found in Sus scrofa (Pig).